The primary structure comprises 375 residues: GDSL esterase/lipase At5g45960 (375 aa).

The N-terminal stretch at 1 to 28 (MRSHHRHFSSYVSFILFLFLFFISFSSS) is a signal peptide. Ser54 functions as the Nucleophile in the catalytic mechanism. N-linked (GlcNAc...) asparagine glycosylation occurs at Asn340. Residues Asp348 and His351 contribute to the active site.

Belongs to the 'GDSL' lipolytic enzyme family.

It localises to the secreted. This chain is GDSL esterase/lipase At5g45960, found in Arabidopsis thaliana (Mouse-ear cress).